The following is a 2620-amino-acid chain: Ankyrin repeat and KH domain-containing protein mask-1 (2620 aa).

12 ANK repeats span residues Ser-254 to Val-283, Asn-288 to Asp-318, Glu-361 to Pro-390, Glu-402 to Leu-431, Ile-437 to Glu-466, Lys-470 to Val-502, Thr-507 to Ala-536, Lys-538 to Gln-566, Gln-568 to Phe-597, Asp-600 to Phe-629, Asn-634 to Leu-663, and Asp-667 to Met-697. 3 disordered regions span residues Lys-699 to Asp-726, His-994 to Ala-1032, and Ser-1192 to Lys-1229. Residues Thr-1012–Gln-1029 are compositionally biased toward polar residues. Residues Ser-1192–Gln-1206 are compositionally biased toward low complexity. Basic and acidic residues predominate over residues Thr-1210–Lys-1221. ANK repeat units follow at residues Thr-1234 to His-1263, Lys-1267 to Ala-1296, Thr-1301 to His-1330, Ser-1334 to Ser-1363, Leu-1369 to Ala-1398, Asn-1403 to His-1432, Thr-1436 to Ala-1465, Thr-1471 to Val-1500, Lys-1504 to Met-1533, and Arg-1537 to Asn-1566. Positions Ala-1596–Glu-1648 form a coiled coil. Disordered stretches follow at residues Gln-1621–Pro-1720 and Lys-1759–Thr-1804. Residues Lys-1636–Ala-1647 show a composition bias toward basic and acidic residues. Over residues Glu-1648–Pro-1661 the composition is skewed to acidic residues. 2 stretches are compositionally biased toward low complexity: residues Pro-1665–Glu-1681 and Lys-1769–Ser-1791. A KH domain is found at Glu-1807–Ile-1873. The segment covering Ala-1899–Asp-1913 has biased composition (polar residues). 8 disordered regions span residues Ala-1899–Trp-1962, Leu-1976–Glu-2010, Ser-2067–Asn-2143, Asn-2267–Gly-2294, Ser-2307–Gln-2343, Gln-2372–Met-2391, Gln-2429–Tyr-2448, and Gln-2496–Trp-2620. Residues Ala-1917–Ser-1946 show a composition bias toward low complexity. Residues Ile-1982 to Pro-1993 show a composition bias toward polar residues. Composition is skewed to low complexity over residues Ser-1994–Asp-2006, Ser-2067–Gln-2078, and Ser-2100–Ser-2118. 2 stretches are compositionally biased toward polar residues: residues Asn-2267–Pro-2286 and Arg-2325–Ile-2339. Residues Ser-2505–Arg-2528 are compositionally biased toward polar residues. The span at Arg-2535–Pro-2547 shows a compositional bias: pro residues. Over residues Ser-2552 to Thr-2565 the composition is skewed to polar residues. 2 stretches are compositionally biased toward low complexity: residues Ser-2566–Gln-2588 and Gln-2597–Trp-2620.

Belongs to the mask family.

It localises to the cytoplasm. The polypeptide is Ankyrin repeat and KH domain-containing protein mask-1 (Caenorhabditis elegans).